Here is a 95-residue protein sequence, read N- to C-terminus: Large ribosomal subunit protein eL37y (95 aa).

Zn(2+)-binding residues include Cys19, Cys22, Cys34, and Cys37. A C4-type zinc finger spans residues 19-37 (CVRCGRRSFHIQKSRCSAC).

Belongs to the eukaryotic ribosomal protein eL37 family. It depends on Zn(2+) as a cofactor.

Its function is as follows. Binds to the 23S rRNA. The chain is Large ribosomal subunit protein eL37y (RPL37B) from Arabidopsis thaliana (Mouse-ear cress).